Consider the following 353-residue polypeptide: N-formyl peptide receptor 3 (353 aa).

Residues 1-27 are Extracellular-facing; the sequence is METNFSIPLNETEEVLPEPAGHTVLWI. N-linked (GlcNAc...) asparagine glycosylation is found at N4 and N10. Residues 28–50 traverse the membrane as a helical segment; sequence FSLLVHGVTFVFGVLGNGLVIWV. Residues 51-61 lie on the Cytoplasmic side of the membrane; that stretch reads AGFRMTRTVNT. Residues 62–83 traverse the membrane as a helical segment; that stretch reads ICYLNLALADFSFSAILPFRMV. Residues 84-100 are Extracellular-facing; the sequence is SVAMREKWPFGSFLCKL. A disulfide bond links C98 and C176. The helical transmembrane segment at 101–121 threads the bilayer; it reads VHVMIDINLFVSVYLITIIAL. The Cytoplasmic segment spans residues 122–140; sequence DRCICVLHPAWAQNHRTMS. A helical transmembrane segment spans residues 141–162; it reads LAKRVMTGLWIFTIVLTLPNFI. Topologically, residues 163-205 are extracellular; sequence FWTTISTTNGDTYCIFNFAFWGDTAVERLNVFITMAKVFLILH. A helical membrane pass occupies residues 206 to 226; that stretch reads FIIGFSVPMSIITVCYGIIAA. The Cytoplasmic portion of the chain corresponds to 227–242; it reads KIHRNHMIKSSRPLRV. A helical transmembrane segment spans residues 243–266; that stretch reads FAAVVASFFICWFPYELIGILMAV. Over 267–286 the chain is Extracellular; sequence WLKEMLLNGKYKIILVLINP. Residues 287 to 306 form a helical membrane-spanning segment; it reads TSSLAFFNSCLNPILYVFMG. The Cytoplasmic segment spans residues 307-353; that stretch reads RNFQERLIRSLPTSLERALTEVPDSAQTSNTDTTSASPPEETELQAM. Residues 327–353 form a disordered region; it reads EVPDSAQTSNTDTTSASPPEETELQAM. Residues 331-343 show a composition bias toward polar residues; that stretch reads SAQTSNTDTTSAS.

This sequence belongs to the G-protein coupled receptor 1 family. As to expression, detected in various tissues with highest expression in lung.

Its subcellular location is the cell membrane. Functionally, low affinity receptor for N-formyl-methionyl peptides, which are powerful neutrophils chemotactic factors. Binding of FMLP to the receptor causes activation of neutrophils. This response is mediated via a G-protein that activates a phosphatidylinositol-calcium second messenger system. Acts as a receptor for humanin. This Homo sapiens (Human) protein is N-formyl peptide receptor 3 (FPR3).